The chain runs to 347 residues: MSPTDPHSLLGLSPGAGEREIKHAFRRLAMRWHPDRNADPAAIEHFKRLRAAYEDLLAEYSRCPAPAAAPHDAQAADARPEPPPEAPPRGADRREDLVLTMEEAFAGGEKAFTIADEIPCGACGGSGEEVLRHTRLCATCHGSGRVRDGRSLTACADCAGRGYLSRQACGACHGSGQARAARKLHVRIPAGVLDGDELRVAGADEDCDRSGGEPGDLILRVVLAPHALYRLDGRDLILSRPVSAFRMLLGGELPIPLPDGVRHLKLESGRATTRELRVKGAGFPGRGKQRAGALIVRLVPVLPEAPDAEILALLEIAESRLQNTLSRHLPDVASWEERWLPDIPETR.

Residues 5–75 form the J domain; it reads DPHSLLGLSP…PAAAPHDAQA (71 aa). Over residues 68–77 the composition is skewed to low complexity; that stretch reads AAPHDAQAAD. The segment at 68–91 is disordered; sequence AAPHDAQAADARPEPPPEAPPRGA. The CR-type zinc finger occupies 107 to 181; sequence GGEKAFTIAD…CHGSGQARAA (75 aa). Zn(2+) is bound by residues Cys-120, Cys-123, Cys-137, Cys-140, Cys-155, Cys-158, Cys-169, and Cys-172. CXXCXGXG motif repeat units follow at residues 120 to 127, 137 to 144, 155 to 162, and 169 to 176; these read CGACGGSG, CATCHGSG, CADCAGRG, and CGACHGSG.

It belongs to the DnaJ family. Homodimer. Zn(2+) serves as cofactor.

It localises to the cytoplasm. In terms of biological role, participates actively in the response to hyperosmotic and heat shock by preventing the aggregation of stress-denatured proteins and by disaggregating proteins, also in an autonomous, DnaK-independent fashion. Unfolded proteins bind initially to DnaJ; upon interaction with the DnaJ-bound protein, DnaK hydrolyzes its bound ATP, resulting in the formation of a stable complex. GrpE releases ADP from DnaK; ATP binding to DnaK triggers the release of the substrate protein, thus completing the reaction cycle. Several rounds of ATP-dependent interactions between DnaJ, DnaK and GrpE are required for fully efficient folding. Also involved, together with DnaK and GrpE, in the DNA replication of plasmids through activation of initiation proteins. This Aromatoleum aromaticum (strain DSM 19018 / LMG 30748 / EbN1) (Azoarcus sp. (strain EbN1)) protein is Chaperone protein DnaJ 1.